The following is a 244-amino-acid chain: METKPVITCLKTLLIIYSFVFWITGVILLAVGVWGKLTLGTYISLIAENSTNAPYVLIGTGTTIVVFGLFGCFATCRGSPWMLKLYAMFLSLVFLAELVAGISGFVFRHEIKDTFLRTYTDAMQTYNGNDERSRAVDHVQRSLSCCGVQNYTNWSTSPYFLEHGIPPSCCMNETDCNPQDLHNLTVAATKVNQKGCYDLVTSFMETNMGIIAGVAFGIAFSQLIGMLLACCLSRFITANQYEMV.

At 1 to 11 (METKPVITCLK) the chain is on the cytoplasmic side. The helical transmembrane segment at 12–35 (TLLIIYSFVFWITGVILLAVGVWG) threads the bilayer. Residues 36 to 51 (KLTLGTYISLIAENST) are Extracellular-facing. A glycan (N-linked (GlcNAc...) asparagine) is linked at Asn-49. The chain crosses the membrane as a helical span at residues 52–70 (NAPYVLIGTGTTIVVFGLF). Topologically, residues 71–81 (GCFATCRGSPW) are cytoplasmic. Residues 82-107 (MLKLYAMFLSLVFLAELVAGISGFVF) traverse the membrane as a helical segment. At 108–208 (RHEIKDTFLR…LVTSFMETNM (101 aa)) the chain is on the extracellular side. N-linked (GlcNAc...) asparagine glycosylation is found at Asn-150, Asn-153, Asn-172, and Asn-183. A helical membrane pass occupies residues 209–229 (GIIAGVAFGIAFSQLIGMLLA). The Cytoplasmic segment spans residues 230-244 (CCLSRFITANQYEMV).

It belongs to the tetraspanin (TM4SF) family.

It is found in the membrane. In terms of biological role, may be involved in cell proliferation and cell motility. The protein is Tetraspanin-7 (TSPAN7) of Pan troglodytes (Chimpanzee).